A 263-amino-acid polypeptide reads, in one-letter code: Hydroxyacylglutathione hydrolase (263 aa).

7 residues coordinate Zn(2+): His-56, His-58, Asp-60, His-61, His-115, Asp-135, and His-175.

Belongs to the metallo-beta-lactamase superfamily. Glyoxalase II family. In terms of assembly, monomer. Requires Zn(2+) as cofactor.

It catalyses the reaction an S-(2-hydroxyacyl)glutathione + H2O = a 2-hydroxy carboxylate + glutathione + H(+). The protein operates within secondary metabolite metabolism; methylglyoxal degradation; (R)-lactate from methylglyoxal: step 2/2. Functionally, thiolesterase that catalyzes the hydrolysis of S-D-lactoyl-glutathione to form glutathione and D-lactic acid. In Nitrosococcus oceani (strain ATCC 19707 / BCRC 17464 / JCM 30415 / NCIMB 11848 / C-107), this protein is Hydroxyacylglutathione hydrolase.